The sequence spans 268 residues: Expansin-B3 (268 aa).

The first 25 residues, 1 to 25 (MAFSISKKAAVAALFSFLVVTCVAG), serve as a signal peptide directing secretion. An N-linked (GlcNAc...) asparagine glycan is attached at asparagine 30. The region spanning 62 to 168 (GGACGFKNTN…KRVPCNFPGL (107 aa)) is the Expansin-like EG45 domain. 3 disulfide bridges follow: cysteine 65/cysteine 93, cysteine 96/cysteine 163, and cysteine 101/cysteine 107. The 82-residue stretch at 181-262 (VYFAVLVEYE…NWAPMAVYRS (82 aa)) folds into the Expansin-like CBD domain. N-linked (GlcNAc...) asparagine glycosylation occurs at asparagine 238.

Belongs to the expansin family. Expansin B subfamily. In terms of tissue distribution, expressed in roots, coleoptiles and internodes.

It localises to the secreted. It is found in the cell wall. The protein resides in the membrane. Functionally, may cause loosening and extension of plant cell walls by disrupting non-covalent bonding between cellulose microfibrils and matrix glucans. No enzymatic activity has been found. May be required for rapid internodal elongation in deepwater rice during submergence. This Oryza sativa subsp. japonica (Rice) protein is Expansin-B3 (EXPB3).